A 549-amino-acid polypeptide reads, in one-letter code: Cation/acetate symporter ActP (549 aa).

A run of 13 helical transmembrane segments spans residues 33 to 53, 77 to 97, 103 to 123, 148 to 168, 183 to 203, 206 to 226, 262 to 282, 303 to 323, 355 to 375, 404 to 424, 428 to 448, 464 to 484, and 493 to 513; these read WQAI…TYWA, LAIA…ALVF, GLIY…LIAE, ILSA…QMVG, IAVV…GMLA, WVQI…AFMV, ISAL…PHIL, GFMG…IMLV, LFLG…VAGL, VSKI…VLFE, IAFM…PIIL, GGWL…TIWV, and IFPY…GIWF.

This sequence belongs to the sodium:solute symporter (SSF) (TC 2.A.21) family.

The protein localises to the cell inner membrane. Functionally, transports acetate. The sequence is that of Cation/acetate symporter ActP from Salmonella gallinarum (strain 287/91 / NCTC 13346).